We begin with the raw amino-acid sequence, 199 residues long: Casparian strip membrane protein 2 (199 aa).

Residues 1–37 (MMRGSTEIDMPESSSVSKGTAPLIAAPMKEKGGYKKG) are Cytoplasmic-facing. Residues 38–58 (IAIFDFILRLAAIATALAAAA) form a helical membrane-spanning segment. Residues 59–87 (SMGTSDETLPFFTQFFQFQASYDDLPTFQ) are Extracellular-facing. A helical transmembrane segment spans residues 88–108 (FFVIAMAIVAGYLVLSLPFSI). The Cytoplasmic segment spans residues 109 to 120 (VAIVRPHAAGPR). The helical transmembrane segment at 121–141 (LLLIILDTVALTLNTAAGAAA) threads the bilayer. The Extracellular portion of the chain corresponds to 142–173 (AAIVYLAHNGNSSTNWLAICQQFGDFCQKNSG). Asn-152 carries N-linked (GlcNAc...) asparagine glycosylation. A helical transmembrane segment spans residues 174 to 194 (AVVASFITVVIFVFLLVLSAF). Topologically, residues 195 to 199 (ALRRH) are cytoplasmic.

The protein belongs to the Casparian strip membrane proteins (CASP) family. As to quaternary structure, homodimer and heterodimers.

The protein resides in the cell membrane. Functionally, regulates membrane-cell wall junctions and localized cell wall deposition. Required for establishment of the Casparian strip membrane domain (CSD) and the subsequent formation of Casparian strips, a cell wall modification of the root endodermis that determines an apoplastic barrier between the intraorganismal apoplasm and the extraorganismal apoplasm and prevents lateral diffusion. The polypeptide is Casparian strip membrane protein 2 (Populus trichocarpa (Western balsam poplar)).